We begin with the raw amino-acid sequence, 828 residues long: Periplasmic nitrate reductase (828 aa).

A signal peptide (tat-type signal) is located at residues 1–31; the sequence is MKLSRRSFMKANAVAAAAAAAGLSVPGVARA. A 4Fe-4S Mo/W bis-MGD-type domain is found at 39–95; that stretch reads IKWDKAPCRFCGTGCGVLVGTQQGRVVACQGDPDAPVNRGLNCIKGYFLPKIMYGKD. Cysteine 46, cysteine 49, cysteine 53, and cysteine 81 together coordinate [4Fe-4S] cluster. Residues lysine 83, glutamine 150, asparagine 175, cysteine 179, 212-219, 243-247, 262-264, methionine 372, glutamine 376, asparagine 482, 508-509, lysine 531, aspartate 558, and 718-727 each bind Mo-bis(molybdopterin guanine dinucleotide); these read WGSNMAEM, STYQH, QSD, SD, and TGRVLEHWHT. Substrate is bound at residue phenylalanine 794. Mo-bis(molybdopterin guanine dinucleotide) contacts are provided by asparagine 802 and lysine 819.

The protein belongs to the prokaryotic molybdopterin-containing oxidoreductase family. NasA/NapA/NarB subfamily. In terms of assembly, component of the periplasmic nitrate reductase NapAB complex composed of NapA and NapB. Requires [4Fe-4S] cluster as cofactor. It depends on Mo-bis(molybdopterin guanine dinucleotide) as a cofactor. Post-translationally, predicted to be exported by the Tat system. The position of the signal peptide cleavage has not been experimentally proven.

It is found in the periplasm. The catalysed reaction is 2 Fe(II)-[cytochrome] + nitrate + 2 H(+) = 2 Fe(III)-[cytochrome] + nitrite + H2O. Functionally, catalytic subunit of the periplasmic nitrate reductase complex NapAB. Receives electrons from NapB and catalyzes the reduction of nitrate to nitrite. This chain is Periplasmic nitrate reductase, found in Escherichia coli O127:H6 (strain E2348/69 / EPEC).